A 686-amino-acid polypeptide reads, in one-letter code: Methionine--tRNA ligase (686 aa).

A 'HIGH' region motif is present at residues 13 to 23; the sequence is PYANGQIHIGH. Zn(2+) is bound by residues C144, C147, C157, and C160. The 'KMSKS' region motif lies at 335–339; it reads KMSKS. Residue K338 participates in ATP binding. The 107-residue stretch at 580 to 686 folds into the tRNA-binding domain; it reads DFAKVDLRVA…EGAVPGMRIG (107 aa).

This sequence belongs to the class-I aminoacyl-tRNA synthetase family. MetG type 1 subfamily. In terms of assembly, homodimer. Zn(2+) serves as cofactor.

It is found in the cytoplasm. The enzyme catalyses tRNA(Met) + L-methionine + ATP = L-methionyl-tRNA(Met) + AMP + diphosphate. In terms of biological role, is required not only for elongation of protein synthesis but also for the initiation of all mRNA translation through initiator tRNA(fMet) aminoacylation. The chain is Methionine--tRNA ligase from Cupriavidus necator (strain ATCC 17699 / DSM 428 / KCTC 22496 / NCIMB 10442 / H16 / Stanier 337) (Ralstonia eutropha).